Reading from the N-terminus, the 282-residue chain is MALEAAGGPPEETLSLWKREQARLKAHVVDRDTEAWQRDPAFSGLQRVGGVDVSFVKGDSVRACASLVVLSFPELEVVYEESRMVSLTAPYVSGFLAFREVPFLLELVQQLREKEPGLMPQVLLVDGNGVLHHRGFGVACHLGVLTDLPCVGVAKKLLQVDGLENNALHKEKIRLLQTRGDSFPLLGDSGTVLGMALRSHDRSTRPLYISVGHRMSLEAAVRLTCCCCRFRIPEPVRQADICSREHIRKSLGLPGPPTPRSPKAQRPVACPKGDSGESSALC.

Residues Asp-52 and Asp-126 each coordinate Mg(2+). The disordered stretch occupies residues 250-282 (SLGLPGPPTPRSPKAQRPVACPKGDSGESSALC).

Belongs to the endonuclease V family. As to quaternary structure, monomer. Interacts with PABPC1; the interaction is RNA-dependent and stimulates ENDOV activity. The cofactor is Mg(2+).

Its subcellular location is the cytoplasm. It localises to the nucleus. The protein resides in the nucleolus. The protein localises to the stress granule. Its activity is regulated as follows. Inhibited by normal intracellular concentrations of ATP. Its function is as follows. Endoribonuclease that specifically cleaves inosine-containing RNAs: cleaves RNA at the second phosphodiester bond 3' to inosine. Active against both single-stranded and double-stranded RNAs. Has strong preference for single-stranded RNAs (ssRNAs) toward double-stranded RNAs (dsRNAs). Cleaves mRNAs and tRNAs containing inosine. Also able to cleave structure-specific dsRNA substrates containing the specific sites 5'-IIUI-3' and 5'-UIUU-3'. Inosine is present in a number of RNAs following editing; the function of inosine-specific endoribonuclease is still unclear: it could either play a regulatory role in edited RNAs, or be involved in antiviral response by removing the hyperedited long viral dsRNA genome that has undergone A-to-I editing. Binds branched DNA structures. Endoribonuclease that specifically cleaves inosine-containing RNAs: cleaves RNA at the second phosphodiester bond 3' to inosine. Active against both single-stranded and double-stranded RNAs. Cleaves tRNAs containing inosine. This chain is Endonuclease V (ENDOV), found in Homo sapiens (Human).